We begin with the raw amino-acid sequence, 306 residues long: Methionyl-tRNA formyltransferase (306 aa).

110 to 113 (SLLP) is a (6S)-5,6,7,8-tetrahydrofolate binding site.

Belongs to the Fmt family.

The enzyme catalyses L-methionyl-tRNA(fMet) + (6R)-10-formyltetrahydrofolate = N-formyl-L-methionyl-tRNA(fMet) + (6S)-5,6,7,8-tetrahydrofolate + H(+). Attaches a formyl group to the free amino group of methionyl-tRNA(fMet). The formyl group appears to play a dual role in the initiator identity of N-formylmethionyl-tRNA by promoting its recognition by IF2 and preventing the misappropriation of this tRNA by the elongation apparatus. The polypeptide is Methionyl-tRNA formyltransferase (Brucella ovis (strain ATCC 25840 / 63/290 / NCTC 10512)).